The chain runs to 420 residues: Tol-Pal system protein TolB (420 aa).

Residues 1–21 (MKLFVHLVLFISLFIPYFTKA) form the signal peptide.

This sequence belongs to the TolB family. As to quaternary structure, the Tol-Pal system is composed of five core proteins: the inner membrane proteins TolA, TolQ and TolR, the periplasmic protein TolB and the outer membrane protein Pal. They form a network linking the inner and outer membranes and the peptidoglycan layer.

The protein localises to the periplasm. Its function is as follows. Part of the Tol-Pal system, which plays a role in outer membrane invagination during cell division and is important for maintaining outer membrane integrity. The protein is Tol-Pal system protein TolB of Wolbachia pipientis wMel.